Reading from the N-terminus, the 304-residue chain is Ribonuclease Z (304 aa).

Histidine 63, histidine 65, aspartate 67, histidine 68, histidine 141, aspartate 208, and histidine 266 together coordinate Zn(2+). Residue aspartate 67 is the Proton acceptor of the active site.

It belongs to the RNase Z family. In terms of assembly, homodimer. Zn(2+) serves as cofactor.

It carries out the reaction Endonucleolytic cleavage of RNA, removing extra 3' nucleotides from tRNA precursor, generating 3' termini of tRNAs. A 3'-hydroxy group is left at the tRNA terminus and a 5'-phosphoryl group is left at the trailer molecule.. Its function is as follows. Zinc phosphodiesterase, which displays some tRNA 3'-processing endonuclease activity. Probably involved in tRNA maturation, by removing a 3'-trailer from precursor tRNA. The chain is Ribonuclease Z from Chlamydia muridarum (strain MoPn / Nigg).